We begin with the raw amino-acid sequence, 682 residues long: E3 ubiquitin ligase Rnf157 (682 aa).

A lipid anchor (N-myristoyl glycine) is attached at glycine 2. The segment at 277–317 (CVVCLSDVRDTLILPCRHCASCNVHCADTLRYQANNCPICR) adopts an RING-type; degenerate zinc-finger fold. Residues 330-333 (RKKL) carry the D-box 1 motif. Disordered regions lie at residues 440–604 (QNSS…VQED) and 655–682 (NTQR…PLAV). Polar residues predominate over residues 479-538 (ESENLTLSSSGAVDQSSCTGTPLSSTISSPEDPASSSLAQSVMSMASSQISTDTVSSMSG). The span at 585-597 (QDAEGNDIMEEED) shows a compositional bias: acidic residues. Positions 658–661 (RRRL) match the D-box 2 motif. Phosphoserine occurs at positions 662, 664, and 665.

In terms of assembly, interacts with APBB1. Interacts with CHD1; CHD1-binding controls RNF157 stability. Also interacts with ATRN, MEGF8, TECR, MSI2, PLRG1, BYSL, MTERF3, PSMA1, MRPS18B, PRPF4, FASTKD2, SLC25A1, SMU1, CNOT9, MRPS2, MAGT1, FXR2, EMD, PSMD8, HDAC1, RAN, HSD17B12, TXNDC5 and MRPL19. As to expression, predominantly expressed in the brain.

The protein localises to the cytoplasm. The enzyme catalyses S-ubiquitinyl-[E2 ubiquitin-conjugating enzyme]-L-cysteine + [acceptor protein]-L-lysine = [E2 ubiquitin-conjugating enzyme]-L-cysteine + N(6)-ubiquitinyl-[acceptor protein]-L-lysine.. In terms of biological role, E3 ubiquitin ligase that ubiquitinates APBB1 for its degradation by the proteasome and thus prevents apoptosis and promotes survival of neurons. Has a dual role in neurons as it is also required for dendrite growth and maintenance for which its ligase activity is not critical. May act as a scaffold molecule to regulate this process. Acts as a downstream effector of the interconnected PI3K and MAPK signaling pathways and thus participates in the regulation of the cell cycle. The chain is E3 ubiquitin ligase Rnf157 (Rnf157) from Rattus norvegicus (Rat).